The chain runs to 102 residues: Defensin (102 aa).

The first 25 residues, 1 to 25 (MKCATIVCTIAVVLAATLLNGSVQA), serve as a signal peptide directing secretion. The propeptide occupies 26 to 62 (APQEEAALSGGANLNTLLDELPEETHHAALENYRAKR). 3 disulfide bridges follow: cysteine 65-cysteine 92, cysteine 78-cysteine 98, and cysteine 82-cysteine 100.

It belongs to the invertebrate defensin family. Type 1 subfamily.

The protein resides in the secreted. In terms of biological role, responsible for the anti Gram-positive activity of immune hemolymph. This is Defensin (Def1) from Anopheles gambiae (African malaria mosquito).